Here is a 566-residue protein sequence, read N- to C-terminus: Protein kintoun (566 aa).

Disordered stretches follow at residues 183–298, 399–467, and 493–552; these read KYKG…TAPQ, EEEE…AETG, and QLEE…ESRI. Residues 208-290 are compositionally biased toward low complexity; that stretch reads PQQTTGPQQP…HQPTDPQQTT (83 aa). Residues 399–424 show a composition bias toward basic and acidic residues; the sequence is EEEERRAEEEESRKGGDEDGELHPDC. The span at 440–467 shows a compositional bias: low complexity; sequence TPAADTHTPAADTHTPAADTHTPAAETG. The span at 535–550 shows a compositional bias: basic and acidic residues; that stretch reads DPAHTDPAHTDPEMES.

Belongs to the PIH1 family. Kintoun subfamily.

It localises to the cytoplasm. The protein resides in the dynein axonemal particle. Functionally, required for cytoplasmic pre-assembly of axonemal dyneins, thereby playing a central role in motility in cilia and flagella. Involved in pre-assembly of dynein arm complexes in the cytoplasm before intraflagellar transport loads them for the ciliary compartment. The chain is Protein kintoun from Danio rerio (Zebrafish).